Reading from the N-terminus, the 332-residue chain is MSKIGINGFGRIGRLVLRAAIDKGASVVAVNDPFIDVNYMVYLFKFDSTHGRFKGTVAAEGGFLVVNGQKITVFSERDPANINWASAGAEYVVESTGVFTTIEKASTHLKGGAKKVVISAPSADAPMFVCGVNLDAYKPDMKVVSNASCTTNCLAPLAKVINDNFEIVEGLMTTVHATTATQKTVDGPSGKLWRDGRGAAQNIIPAATGAAKAVGKVIPALNGKLTGMAFRVPTPNVSVVDLTVRLGKGASYDEIKAKVQEAANGPLKGILGYTDEEVVSTDFLSDTHSSVFDAKAGISLNDKFVKLISWYDNEFGYSNRVIDLIKYMQSKD.

Residues R11–I12, D32, and R77 each bind NAD(+). Residues S148–T150, T179, T208–G209, and R231 contribute to the D-glyceraldehyde 3-phosphate site. C149 functions as the Nucleophile in the catalytic mechanism. N313 is a binding site for NAD(+).

This sequence belongs to the glyceraldehyde-3-phosphate dehydrogenase family. As to quaternary structure, homotetramer.

It localises to the cytoplasm. It catalyses the reaction D-glyceraldehyde 3-phosphate + phosphate + NAD(+) = (2R)-3-phospho-glyceroyl phosphate + NADH + H(+). Its pathway is carbohydrate degradation; glycolysis; pyruvate from D-glyceraldehyde 3-phosphate: step 1/5. In Drosophila pseudoobscura pseudoobscura (Fruit fly), this protein is Glyceraldehyde-3-phosphate dehydrogenase 2 (Gapdh2).